Here is a 565-residue protein sequence, read N- to C-terminus: Peptide transport periplasmic protein SapA (565 aa).

An N-terminal signal peptide occupies residues 1–23 (MLRLNLRFLSFLLCIIQSVELQA).

Belongs to the bacterial solute-binding protein 5 family.

The protein localises to the periplasm. Involved in a peptide intake transport system that plays a role in the resistance to antimicrobial peptides. The chain is Peptide transport periplasmic protein SapA (sapA) from Haemophilus influenzae (strain ATCC 51907 / DSM 11121 / KW20 / Rd).